A 533-amino-acid chain; its full sequence is Ribonuclease Y (533 aa).

The disordered stretch occupies residues 16–41 (VERIRRRAEQDAAEQTERVRREAEQI). The span at 22–41 (RAEQDAAEQTERVRREAEQI) shows a compositional bias: basic and acidic residues. The KH domain maps to 223 to 289 (VVSVLHLPSD…RITLTALVSD (67 aa)). Positions 349–442 (VLAHLVESAH…TQAADQISGG (94 aa)) constitute an HD domain.

Belongs to the RNase Y family.

Functionally, endoribonuclease that initiates mRNA decay. This chain is Ribonuclease Y, found in Parafrankia sp. (strain EAN1pec).